The chain runs to 289 residues: 2,3-dimethylmalate lyase (289 aa).

It belongs to the isocitrate lyase/PEP mutase superfamily. In terms of assembly, homotetramer. It depends on Mg(2+) as a cofactor.

The catalysed reaction is (2R,3S)-2,3-dimethylmalate = propanoate + pyruvate. Its pathway is cofactor degradation; nicotinate degradation; propanoate and pyruvate from 6-hydroxynicotinate: step 8/8. Completely inhibited by propionic anhydride and by cystamine. Irreversibly inhibited by the mercapto reagents iodoacetate and iodoacetamide. Unaffected by hydroxylamine. Catalyzes the formation of proponate and pyruvate from (2R,3S)-2,3-dimethylmalate. Has no activity toward dimethylmaleate, malate, citramalate, isocitrate and citrate. This Eubacterium barkeri (Clostridium barkeri) protein is 2,3-dimethylmalate lyase.